Reading from the N-terminus, the 547-residue chain is Rho GTPase-activating protein 36 (547 aa).

Residues 1–40 (MGGCNPFLKAARTLCPRIMPPLLFLSAFIFLVNVLGGAPG) form the signal peptide. In terms of domain architecture, Rho-GAP spans 226–426 (MSLNPIAKQI…AMIDNWDILF (201 aa)). The tract at residues 493-547 (FDEGSSEEPAVPPGTAHSHDDEEGAGNPPIPEQDRPLLRVPREKQAKTGIGYFFP) is disordered. Residues 524–538 (EQDRPLLRVPREKQA) are compositionally biased toward basic and acidic residues.

Its function is as follows. GTPase activator for the Rho-type GTPases by converting them to an inactive GDP-bound state. The sequence is that of Rho GTPase-activating protein 36 (ARHGAP36) from Ailuropoda melanoleuca (Giant panda).